We begin with the raw amino-acid sequence, 192 residues long: Hydrogenase expression/formation protein HupD (192 aa).

Residues Glu-23, Asp-69, and His-100 each contribute to the Ni(2+) site.

This sequence belongs to the peptidase A31 family.

Not known. Could be involved in the processing of hydrogenase. The chain is Hydrogenase expression/formation protein HupD (hupD) from Bradyrhizobium diazoefficiens (strain JCM 10833 / BCRC 13528 / IAM 13628 / NBRC 14792 / USDA 110).